A 334-amino-acid chain; its full sequence is Replication factor C subunit 4 (334 aa).

55–62 serves as a coordination point for ATP; the sequence is GPPGTGKT.

Belongs to the activator 1 small subunits family. Heteropentamer of various rfc subunits that forms a complex (RFC) with PCNA in the presence of ATP.

It localises to the nucleus. Functionally, the elongation of primed DNA templates by DNA polymerase delta and epsilon requires the action of the accessory proteins PCNA and activator 1. This subunit may be involved in the elongation of the multiprimed DNA template. In Caenorhabditis elegans, this protein is Replication factor C subunit 4 (rfc-4).